The primary structure comprises 923 residues: Immunomodulating metalloprotease (923 aa).

Residues 1–41 (MSLSTTAFPSLQGENMSRSPIPRHRALLAGFCLAGALSAQA) form the signal peptide. In terms of domain architecture, Peptidase M60 spans 450–794 (QGFTAIGRMA…FYTQWVHYWA (345 aa)). A Zn(2+)-binding site is contributed by His-696. Glu-697 is an active-site residue. His-700 is a Zn(2+) binding site.

This sequence belongs to the peptidase M88 family. Requires Zn(2+) as cofactor.

It localises to the secreted. Proteolytic activity is blocked in the presence of EDTA. Protease that degrades several proteins of the host immune system. Cleaves P-selectin glycoprotein ligand-1 (PSGL-1), leading to its functional inhibition; PSGL-1 is a leukocyte cell-surface receptor essential for leukocyte recruitment to the site of infection. Next to PSGL-1, targets host CD43 and CD44 that are also involved in leukocyte homing. Thus, prevents neutrophil extravasation and thereby protects P.aeruginosa from neutrophil attack. Is also able to inhibit the decay accelerating factor (CD55), but not the cell-surface receptors CD46 and CD31. The sequence is that of Immunomodulating metalloprotease from Pseudomonas aeruginosa (strain ATCC 15692 / DSM 22644 / CIP 104116 / JCM 14847 / LMG 12228 / 1C / PRS 101 / PAO1).